A 257-amino-acid polypeptide reads, in one-letter code: V-type proton ATPase subunit D (257 aa).

The segment at 211-233 (KKKDLKAKEAQKEENSANKTIME) is disordered. The segment covering 216–226 (KAKEAQKEENS) has biased composition (basic and acidic residues).

It belongs to the V-ATPase D subunit family. In terms of assembly, V-ATPase is a heteromultimeric enzyme composed of a peripheral catalytic V1 complex (components A to H) attached to an integral membrane V0 proton pore complex (components: a, c, c', c'' and d).

Subunit of the peripheral V1 complex of vacuolar ATPase. Vacuolar ATPase is responsible for acidifying a variety of intracellular compartments in eukaryotic cells, thus providing most of the energy required for transport processes in the vacuolar system. This is V-type proton ATPase subunit D (atp6v1d) from Dictyostelium discoideum (Social amoeba).